The chain runs to 342 residues: N-acetyl-gamma-glutamyl-phosphate reductase (342 aa).

The active site involves Cys-147.

Belongs to the NAGSA dehydrogenase family. Type 1 subfamily.

It localises to the cytoplasm. The enzyme catalyses N-acetyl-L-glutamate 5-semialdehyde + phosphate + NADP(+) = N-acetyl-L-glutamyl 5-phosphate + NADPH + H(+). It functions in the pathway amino-acid biosynthesis; L-arginine biosynthesis; N(2)-acetyl-L-ornithine from L-glutamate: step 3/4. Catalyzes the NADPH-dependent reduction of N-acetyl-5-glutamyl phosphate to yield N-acetyl-L-glutamate 5-semialdehyde. The protein is N-acetyl-gamma-glutamyl-phosphate reductase of Campylobacter jejuni subsp. doylei (strain ATCC BAA-1458 / RM4099 / 269.97).